A 692-amino-acid polypeptide reads, in one-letter code: Tripartite terminase subunit 1 (692 aa).

The C3H1-type zinc finger occupies Cys-190 to His-218. Residue Tyr-634–Arg-641 participates in ATP binding.

The protein belongs to the herpesviridae TRM1 protein family. In terms of assembly, associates with TRM2 and TRM3 to form the tripartite terminase complex. Interacts with portal protein.

Its subcellular location is the host nucleus. In terms of biological role, component of the molecular motor that translocates viral genomic DNA in empty capsid during DNA packaging. Forms a tripartite terminase complex together with TRM2 and TRM3 in the host cytoplasm. Once the complex reaches the host nucleus, it interacts with the capsid portal vertex. This portal forms a ring in which genomic DNA is translocated into the capsid. TRM1 carries an endonuclease activity that plays an important role for the cleavage of concatemeric viral DNA into unit length genomes. In Elephas maximus (Indian elephant), this protein is Tripartite terminase subunit 1.